The chain runs to 81 residues: Cytochrome b559 subunit alpha (81 aa).

The helical transmembrane segment at 21–35 (VIHSITIPALFIAGW) threads the bilayer. Residue H23 participates in heme binding.

The protein belongs to the PsbE/PsbF family. In terms of assembly, heterodimer of an alpha subunit and a beta subunit. PSII is composed of 1 copy each of membrane proteins PsbA, PsbB, PsbC, PsbD, PsbE, PsbF, PsbH, PsbI, PsbJ, PsbK, PsbL, PsbM, PsbT, PsbX, PsbY, PsbZ, Psb30/Ycf12, at least 3 peripheral proteins of the oxygen-evolving complex and a large number of cofactors. It forms dimeric complexes. Heme b is required as a cofactor.

The protein localises to the plastid. It is found in the chloroplast thylakoid membrane. Functionally, this b-type cytochrome is tightly associated with the reaction center of photosystem II (PSII). PSII is a light-driven water:plastoquinone oxidoreductase that uses light energy to abstract electrons from H(2)O, generating O(2) and a proton gradient subsequently used for ATP formation. It consists of a core antenna complex that captures photons, and an electron transfer chain that converts photonic excitation into a charge separation. This is Cytochrome b559 subunit alpha from Tetradesmus obliquus (Green alga).